A 450-amino-acid chain; its full sequence is Carbamoyl phosphate synthase arginine-specific small chain (450 aa).

The N-terminal 29 residues, 1–29 (MFAARLFKAMPARASAFPSVNASIQSRFM), are a transit peptide targeting the mitochondrion. The 188-residue stretch at 220 to 407 (HVAVIDCGVK…LDSVRKYKAS (188 aa)) folds into the Glutamine amidotransferase type-1 domain. The Nucleophile role is filled by Cys296. Active-site residues include His380 and Glu382.

Belongs to the CarA family. Heterodimer composed of 2 chains; the small (or glutamine) chain promotes the hydrolysis of glutamine to ammonia, which is used by the large (or ammonia) chain to synthesize carbamoyl phosphate.

The protein localises to the mitochondrion matrix. It catalyses the reaction hydrogencarbonate + L-glutamine + 2 ATP + H2O = carbamoyl phosphate + L-glutamate + 2 ADP + phosphate + 2 H(+). The catalysed reaction is L-glutamine + H2O = L-glutamate + NH4(+). The protein operates within amino-acid biosynthesis; L-arginine biosynthesis; carbamoyl phosphate from bicarbonate: step 1/1. In terms of biological role, small subunit of the arginine-specific carbamoyl phosphate synthase (CPSase). CPSase catalyzes the formation of carbamoyl phosphate from the ammonia moiety of glutamine, carbonate, and phosphate donated by ATP, the first step of the arginine biosynthetic pathway. The small subunit (glutamine amidotransferase) binds and cleaves glutamine to supply the large subunit with the substrate ammonia. The chain is Carbamoyl phosphate synthase arginine-specific small chain (cpa1) from Aspergillus oryzae (strain ATCC 42149 / RIB 40) (Yellow koji mold).